The following is a 219-amino-acid chain: MLRRILTTSSVRNLTSSTQARVGIPFVIDNEGKGERTYDIYSRLLRDRIVCLMTPVDDFMASALIAQLLFLQSESSKKPIHMYINSPGGSVTAGLAIYDTMQMISAPVATWVIGQASSMGSLLLAAGEKGMRSALPNARIMVHQPSGGAQGTCSDIVIRAEEITRLKKRLNEIYVHHTGISYDEIERTLDRDRFMSAQEALKFGLVDKIEKHTGSMPTD.

The transit peptide at 1 to 23 (MLRRILTTSSVRNLTSSTQARVG) directs the protein to the mitochondrion. The Nucleophile role is filled by S118. H143 is a catalytic residue.

This sequence belongs to the peptidase S14 family. In terms of assembly, tetradecamer that assembles into a two heptameric rings with a central cavity.

It is found in the mitochondrion matrix. It catalyses the reaction Hydrolysis of proteins to small peptides in the presence of ATP and magnesium. alpha-casein is the usual test substrate. In the absence of ATP, only oligopeptides shorter than five residues are hydrolyzed (such as succinyl-Leu-Tyr-|-NHMec, and Leu-Tyr-Leu-|-Tyr-Trp, in which cleavage of the -Tyr-|-Leu- and -Tyr-|-Trp bonds also occurs).. Functionally, clp cleaves peptides in various proteins in a process that requires ATP hydrolysis. Clp may be responsible for a fairly general and central housekeeping function rather than for the degradation of specific substrates. This Caenorhabditis briggsae protein is ATP-dependent Clp protease proteolytic subunit 1, mitochondrial.